The primary structure comprises 377 residues: Actin-related protein T2 (377 aa).

The protein belongs to the actin family.

Its subcellular location is the cytoplasm. It is found in the cytoskeleton. The chain is Actin-related protein T2 (Actrt2) from Mus musculus (Mouse).